We begin with the raw amino-acid sequence, 434 residues long: Glucose-1-phosphate adenylyltransferase (434 aa).

Alpha-D-glucose 1-phosphate-binding positions include tyrosine 112, glycine 178, 193 to 194 (EK), and serine 211.

This sequence belongs to the bacterial/plant glucose-1-phosphate adenylyltransferase family. As to quaternary structure, homotetramer.

It carries out the reaction alpha-D-glucose 1-phosphate + ATP + H(+) = ADP-alpha-D-glucose + diphosphate. It functions in the pathway glycan biosynthesis; glycogen biosynthesis. Involved in the biosynthesis of ADP-glucose, a building block required for the elongation reactions to produce glycogen. Catalyzes the reaction between ATP and alpha-D-glucose 1-phosphate (G1P) to produce pyrophosphate and ADP-Glc. In Mannheimia succiniciproducens (strain KCTC 0769BP / MBEL55E), this protein is Glucose-1-phosphate adenylyltransferase.